An 88-amino-acid chain; its full sequence is DNA-directed RNA polymerase subunit omega (88 aa).

The protein belongs to the RNA polymerase subunit omega family. In terms of assembly, the RNAP catalytic core consists of 2 alpha, 1 beta, 1 beta' and 1 omega subunit. When a sigma factor is associated with the core the holoenzyme is formed, which can initiate transcription.

It carries out the reaction RNA(n) + a ribonucleoside 5'-triphosphate = RNA(n+1) + diphosphate. In terms of biological role, promotes RNA polymerase assembly. Latches the N- and C-terminal regions of the beta' subunit thereby facilitating its interaction with the beta and alpha subunits. The protein is DNA-directed RNA polymerase subunit omega of Clostridioides difficile (strain 630) (Peptoclostridium difficile).